The sequence spans 567 residues: Polyadenylate-binding protein-interacting protein 7 (567 aa).

Residues 1 to 22 (MSLTKKASEPKLSGTSIKPTTL) form a disordered region. Residues 13–22 (SGTSIKPTTL) are compositionally biased toward polar residues. The PAM2-like signature appears at 21-31 (TLNPHAAEFVP). A CUE domain is found at 215–259 (DMEVNPVDFLASQFPGFAAESLAEVYFANGCDLQLTIEMLTQLEL). The disordered stretch occupies residues 355–387 (RNDSADSSIGSSRNSGAYKSGRGRSIYSDKLQS). A compositionally biased stretch (polar residues) spans 359 to 371 (ADSSIGSSRNSGA). Positions 485–567 (IDLHGLHVSE…QAGLLRVIIY (83 aa)) constitute a Smr domain.

As to quaternary structure, interacts with MPC and PAB2. In terms of tissue distribution, expressed in cauline leaves, stems, rosette leaves, immature siliques and primary inflorescences.

This chain is Polyadenylate-binding protein-interacting protein 7 (CID7), found in Arabidopsis thaliana (Mouse-ear cress).